A 286-amino-acid polypeptide reads, in one-letter code: ATP synthase gamma chain (286 aa).

Belongs to the ATPase gamma chain family. F-type ATPases have 2 components, CF(1) - the catalytic core - and CF(0) - the membrane proton channel. CF(1) has five subunits: alpha(3), beta(3), gamma(1), delta(1), epsilon(1). CF(0) has three main subunits: a, b and c.

It localises to the cell inner membrane. In terms of biological role, produces ATP from ADP in the presence of a proton gradient across the membrane. The gamma chain is believed to be important in regulating ATPase activity and the flow of protons through the CF(0) complex. This chain is ATP synthase gamma chain, found in Alcanivorax borkumensis (strain ATCC 700651 / DSM 11573 / NCIMB 13689 / SK2).